The following is a 1127-amino-acid chain: uncharacterized protein (1127 aa).

The signal sequence occupies residues 1–26 (MRIHQRSAPCVPVLLFLFLPSAPLCA). A disordered region spans residues 533-600 (ETESLSPPAD…ASSSPSEMAV (68 aa)). 2 stretches are compositionally biased toward low complexity: residues 536 to 549 (SLSP…TPSP) and 583 to 599 (AGAS…SEMA). A coiled-coil region spans residues 1076-1126 (SEDEKEYQRALQELQKGNKLVASAVVEQLLQKDRNKKSAKIQQLKKRIDAQ).

This is an uncharacterized protein from Treponema pallidum (strain Nichols).